Reading from the N-terminus, the 257-residue chain is Imidazole glycerol phosphate synthase subunit HisF (257 aa).

Residues Asp-11 and Asp-130 contribute to the active site.

This sequence belongs to the HisA/HisF family. In terms of assembly, heterodimer of HisH and HisF.

The protein localises to the cytoplasm. It catalyses the reaction 5-[(5-phospho-1-deoxy-D-ribulos-1-ylimino)methylamino]-1-(5-phospho-beta-D-ribosyl)imidazole-4-carboxamide + L-glutamine = D-erythro-1-(imidazol-4-yl)glycerol 3-phosphate + 5-amino-1-(5-phospho-beta-D-ribosyl)imidazole-4-carboxamide + L-glutamate + H(+). It functions in the pathway amino-acid biosynthesis; L-histidine biosynthesis; L-histidine from 5-phospho-alpha-D-ribose 1-diphosphate: step 5/9. Its function is as follows. IGPS catalyzes the conversion of PRFAR and glutamine to IGP, AICAR and glutamate. The HisF subunit catalyzes the cyclization activity that produces IGP and AICAR from PRFAR using the ammonia provided by the HisH subunit. The sequence is that of Imidazole glycerol phosphate synthase subunit HisF from Vibrio parahaemolyticus serotype O3:K6 (strain RIMD 2210633).